We begin with the raw amino-acid sequence, 238 residues long: Pyruvate formate-lyase-activating enzyme (238 aa).

The 222-residue stretch at 15–236 folds into the Radical SAM core domain; that stretch reads VDGPGIRTVV…KKLEKYLKEL (222 aa). C29, C33, and C36 together coordinate [4Fe-4S] cluster. S-adenosyl-L-methionine contacts are provided by residues 35–37, G78, 126–128, and H199; these read YCH and DIK.

It belongs to the organic radical-activating enzymes family. Requires [4Fe-4S] cluster as cofactor.

It is found in the cytoplasm. It catalyses the reaction glycyl-[formate C-acetyltransferase] + reduced [flavodoxin] + S-adenosyl-L-methionine = glycin-2-yl radical-[formate C-acetyltransferase] + semiquinone [flavodoxin] + 5'-deoxyadenosine + L-methionine + H(+). Its function is as follows. Activation of pyruvate formate-lyase under anaerobic conditions by generation of an organic free radical, using S-adenosylmethionine and reduced flavodoxin as cosubstrates to produce 5'-deoxy-adenosine. This is Pyruvate formate-lyase-activating enzyme (act) from Clostridium pasteurianum.